The following is a 497-amino-acid chain: C4-dicarboxylate transport protein (497 aa).

8 consecutive transmembrane segments (helical) span residues 27–45, 60–82, 95–117, 168–185, 205–227, 237–259, 348–370, and 374–393; these read LYVQVLAAIAVGILLGYFY, IMLVKMIIAPVIFLTVATGIAGM, AMIYFLTFSTLALLVGLVVANVV, ILQVLFISVLFGISLAIV, RLVAILMKAAPIGAFGAMAFTIG, LAMLIGTFYLTSFLFVFMVLGAV, ILLLLIAMLSSKGAAGITGAGFI, and ATLSAVPSVPVAGMALILGI. Positions 466–497 are disordered; the sequence is ADRTLAGRPGGRDSRRIAPDHSAQVFGGPLSL. The segment covering 475–484 has biased composition (basic and acidic residues); it reads GGRDSRRIAP.

Belongs to the dicarboxylate/amino acid:cation symporter (DAACS) (TC 2.A.23) family.

It is found in the cell inner membrane. Responsible for the transport of dicarboxylates such as succinate, fumarate, and malate from the periplasm across the inner membrane. This transport system plays an essential role in the energy supply of tropical rhizobium-legume symbionts. This is C4-dicarboxylate transport protein (dctA1) from Sinorhizobium fredii (strain NBRC 101917 / NGR234).